The sequence spans 173 residues: NADH-ubiquinone oxidoreductase chain 6 (173 aa).

5 helical membrane-spanning segments follow: residues 1 to 21, 24 to 44, 53 to 73, 86 to 106, and 139 to 159; these read MTYL…AVAS, APYF…GVLV, LVLF…SAAL, SVVG…GVFW, and YGGG…FVVL.

Belongs to the complex I subunit 6 family.

It is found in the mitochondrion membrane. The enzyme catalyses a ubiquinone + NADH + 5 H(+)(in) = a ubiquinol + NAD(+) + 4 H(+)(out). Functionally, core subunit of the mitochondrial membrane respiratory chain NADH dehydrogenase (Complex I) that is believed to belong to the minimal assembly required for catalysis. Complex I functions in the transfer of electrons from NADH to the respiratory chain. The immediate electron acceptor for the enzyme is believed to be ubiquinone. This chain is NADH-ubiquinone oxidoreductase chain 6 (MT-ND6), found in Formosania lacustris (Oriental stream loach).